A 210-amino-acid polypeptide reads, in one-letter code: Ribonuclease HII (210 aa).

In terms of domain architecture, RNase H type-2 spans glycine 18–leucine 210. Positions 24, 25, and 116 each coordinate a divalent metal cation.

This sequence belongs to the RNase HII family. Requires Mn(2+) as cofactor. Mg(2+) is required as a cofactor.

It localises to the cytoplasm. The enzyme catalyses Endonucleolytic cleavage to 5'-phosphomonoester.. Functionally, endonuclease that specifically degrades the RNA of RNA-DNA hybrids. The protein is Ribonuclease HII of Shewanella baltica (strain OS223).